Here is a 178-residue protein sequence, read N- to C-terminus: Nicotinamide-nucleotide adenylyltransferase (178 aa).

Belongs to the archaeal NMN adenylyltransferase family.

It localises to the cytoplasm. It carries out the reaction beta-nicotinamide D-ribonucleotide + ATP + H(+) = diphosphate + NAD(+). Its pathway is cofactor biosynthesis; NAD(+) biosynthesis; NAD(+) from nicotinamide D-ribonucleotide: step 1/1. In Pyrobaculum aerophilum (strain ATCC 51768 / DSM 7523 / JCM 9630 / CIP 104966 / NBRC 100827 / IM2), this protein is Nicotinamide-nucleotide adenylyltransferase.